Consider the following 144-residue polypeptide: MAVSMQVDIVSAEGSLFSGKADMVFAQAADGEVGILPKHTQLLTQLKPGQVRVVSGDEEDSFFINSGVLEVQPSVVTILADTAIRAEDLDQAAAEEAKRRAEDAMEQAKSDTDIARAQIELAEAVAQIQTITKLRDRLHKTGLS.

The protein belongs to the ATPase epsilon chain family. F-type ATPases have 2 components, CF(1) - the catalytic core - and CF(0) - the membrane proton channel. CF(1) has five subunits: alpha(3), beta(3), gamma(1), delta(1), epsilon(1). CF(0) has three main subunits: a, b and c.

It localises to the cell inner membrane. Its function is as follows. Produces ATP from ADP in the presence of a proton gradient across the membrane. The protein is ATP synthase epsilon chain of Hydrogenovibrio crunogenus (strain DSM 25203 / XCL-2) (Thiomicrospira crunogena).